Reading from the N-terminus, the 210-residue chain is Syntaxin-binding protein 6 (210 aa).

At Ser-2 the chain carries N-acetylserine. Residues 151 to 210 (GNSILHSAADSVTSAVQKASQALNERGERLGRAEEKTEDMKNSAQQFAETAHKLAMKHKC) enclose the v-SNARE coiled-coil homology domain.

Part of a ternary complex containing SNAP25 and STX1A that can be dissociated by NAPA and NSF. Interacts with STX4A.

It is found in the cytoplasm. The protein localises to the membrane. Forms non-fusogenic complexes with SNAP25 and STX1A and may thereby modulate the formation of functional SNARE complexes and exocytosis. The protein is Syntaxin-binding protein 6 (Stxbp6) of Mus musculus (Mouse).